Here is a 700-residue protein sequence, read N- to C-terminus: DNA ligase (700 aa).

NAD(+) is bound by residues 61–65 (DAEYD), 110–111 (SL), and glutamate 141. Lysine 143 (N6-AMP-lysine intermediate) is an active-site residue. 4 residues coordinate NAD(+): arginine 164, glutamate 202, lysine 321, and lysine 345. 4 residues coordinate Zn(2+): cysteine 439, cysteine 442, cysteine 457, and cysteine 462. Residues 619 to 700 (AVSNKLAGLQ…EFLRLLEDSK (82 aa)) form the BRCT domain.

It belongs to the NAD-dependent DNA ligase family. LigA subfamily. Requires Mg(2+) as cofactor. It depends on Mn(2+) as a cofactor.

It carries out the reaction NAD(+) + (deoxyribonucleotide)n-3'-hydroxyl + 5'-phospho-(deoxyribonucleotide)m = (deoxyribonucleotide)n+m + AMP + beta-nicotinamide D-nucleotide.. DNA ligase that catalyzes the formation of phosphodiester linkages between 5'-phosphoryl and 3'-hydroxyl groups in double-stranded DNA using NAD as a coenzyme and as the energy source for the reaction. It is essential for DNA replication and repair of damaged DNA. The chain is DNA ligase from Hydrogenobaculum sp. (strain Y04AAS1).